Reading from the N-terminus, the 222-residue chain is Large ribosomal subunit protein uL11c (222 aa).

Residues 1 to 20 form a disordered region; it reads MASSSLSTLCSSTSSSLHPN. A chloroplast-targeting transit peptide spans 1 to 62; it reads MASSSLSTLC…TPRFLTVIAM (62 aa).

This sequence belongs to the universal ribosomal protein uL11 family. As to quaternary structure, part of the ribosomal stalk of the 50S ribosomal subunit. Interacts with L10 and the large rRNA to form the base of the stalk. L10 forms an elongated spine to which L12 dimers bind in a sequential fashion forming a multimeric L10(L12)X complex.

The protein localises to the plastid. It localises to the chloroplast. Functionally, forms part of the ribosomal stalk which helps the ribosome interact with GTP-bound translation factors. The protein is Large ribosomal subunit protein uL11c (RPL11) of Arabidopsis thaliana (Mouse-ear cress).